We begin with the raw amino-acid sequence, 90 residues long: Non-structural protein NS-S (90 aa).

Positions 4–29 are nucleolar signal; it reads KLSLPGKNLKMQKRRWKPTRMMLTRA.

Belongs to the hantavirus NS-S protein family. As to quaternary structure, interacts with host MAVS; this interaction may reduce MAVS ubiquitination.

The protein resides in the host cytoplasm. It is found in the host perinuclear region. The protein localises to the host nucleus. Antagonizes host type-I IFN signaling pathway. The sequence is that of Non-structural protein NS-S (N) from Homo sapiens (Human).